A 729-amino-acid chain; its full sequence is MLYKGDTLYLDWLEDGIAELVFDAPGSVNKLDTATVASLGEAIGVLEQQSDLKGLLLRSNKAAFIVGADITEFLSLFLVPEEQLSQWLHFANSVFNRLEDLPVPTIAAVNGYALGGGCECVLATDYRLATPDLRIGLPETKLGIMPGFGGSVRMPRMLGADSALEIIAAGKDVGADQALKIGLVDGVVKAEKLVEGAMAILRQAINGDLDWKAKRQPKLEPLKLSKIEATMSFTIAKGMVAQTAGKHYPAPITAVKTIEAAARFGREEALNLENKSFVPLAHTNEARALVGIFLNDQYVKGKAKKLTKDVETPKQAAVLGAGIMGGGIAYQSAWKGVPVVMKDINDKSLTLGMTEAAKLLNKQLERGKIDGLKLAGVISTIHPTLDYAGFDRVDIVVEAVVENPKVKKAVLAETEQKVRPDTVLASNTSTIPISELANALERPENFCGMHFFNPVHRMPLVEIIRGEKSSDETIAKVVAWASKMGKTPIVVNDCPGFFVNRVLFPYFAGFSQLLRDGADFRKIDKVMEKQFGWPMGPAYLLDVVGIDTAHHAQAVMAAGFPQRMQKDYRDAIDALFDANRFGQKNGLGFWRYKEDSKGKPKKEEDAAVDDLLAEVSQPKRDFSEEEIIARMMIPMVNEVVRCLEEGIIATPAEADMALVYGLGFPPFHGGAFRWLDTLGSAKYLDMAQQYQHLGPLYEVPEGLRNKARHNEPYYPPVEPARPVGDLKTA.

The enoyl-CoA hydratase/isomerase stretch occupies residues 1 to 189 (MLYKGDTLYL…KIGLVDGVVK (189 aa)). Residue Asp-296 coordinates substrate. Residues 311–729 (ETPKQAAVLG…ARPVGDLKTA (419 aa)) are 3-hydroxyacyl-CoA dehydrogenase. NAD(+) contacts are provided by residues Met-324, Asp-343, 400-402 (VVE), Lys-407, and Ser-429. Residue His-450 is the For 3-hydroxyacyl-CoA dehydrogenase activity of the active site. Residue Asn-453 coordinates NAD(+). Asn-500 and Tyr-660 together coordinate substrate. A disordered region spans residues 708-729 (RHNEPYYPPVEPARPVGDLKTA).

In the N-terminal section; belongs to the enoyl-CoA hydratase/isomerase family. It in the C-terminal section; belongs to the 3-hydroxyacyl-CoA dehydrogenase family. In terms of assembly, heterotetramer of two alpha chains (FadB) and two beta chains (FadA).

The catalysed reaction is a (3S)-3-hydroxyacyl-CoA + NAD(+) = a 3-oxoacyl-CoA + NADH + H(+). It carries out the reaction a (3S)-3-hydroxyacyl-CoA = a (2E)-enoyl-CoA + H2O. It catalyses the reaction a 4-saturated-(3S)-3-hydroxyacyl-CoA = a (3E)-enoyl-CoA + H2O. The enzyme catalyses (3S)-3-hydroxybutanoyl-CoA = (3R)-3-hydroxybutanoyl-CoA. The catalysed reaction is a (3Z)-enoyl-CoA = a 4-saturated (2E)-enoyl-CoA. It carries out the reaction a (3E)-enoyl-CoA = a 4-saturated (2E)-enoyl-CoA. The protein operates within lipid metabolism; fatty acid beta-oxidation. Its function is as follows. Involved in the aerobic and anaerobic degradation of long-chain fatty acids via beta-oxidation cycle. Catalyzes the formation of 3-oxoacyl-CoA from enoyl-CoA via L-3-hydroxyacyl-CoA. It can also use D-3-hydroxyacyl-CoA and cis-3-enoyl-CoA as substrate. The sequence is that of Fatty acid oxidation complex subunit alpha from Escherichia coli O17:K52:H18 (strain UMN026 / ExPEC).